The chain runs to 262 residues: Type III pantothenate kinase (262 aa).

6–13 (DVGNTNAV) contributes to the ATP binding site. Residues tyrosine 100 and 107–110 (GADR) each bind substrate. Catalysis depends on aspartate 109, which acts as the Proton acceptor. Aspartate 129 lines the K(+) pocket. An ATP-binding site is contributed by threonine 132. Threonine 184 is a binding site for substrate.

It belongs to the type III pantothenate kinase family. As to quaternary structure, homodimer. It depends on NH4(+) as a cofactor. K(+) is required as a cofactor.

The protein resides in the cytoplasm. It catalyses the reaction (R)-pantothenate + ATP = (R)-4'-phosphopantothenate + ADP + H(+). It participates in cofactor biosynthesis; coenzyme A biosynthesis; CoA from (R)-pantothenate: step 1/5. In terms of biological role, catalyzes the phosphorylation of pantothenate (Pan), the first step in CoA biosynthesis. The polypeptide is Type III pantothenate kinase (Bacillus cereus (strain G9842)).